The following is a 488-amino-acid chain: Cruciferin (488 aa).

Positions 1-23 are cleaved as a signal peptide; sequence MARLSSLLSFSLALLTFLHGSTA. Intrachain disulfides connect cysteine 30–cysteine 63 and cysteine 105–cysteine 305. Cupin type-1 domains are found at residues 35 to 262 and 311 to 460; these read LNAL…RTAQ and DNLD…EEAR. Positions 116 to 163 are disordered; the sequence is QPSGGSPFGEGQGQGQQGQGQGHQGQGQGQQGQQGQQGQQSQGQGFRD. Positions 121–147 are enriched in gly residues; it reads SPFGEGQGQGQQGQGQGHQGQGQGQQG. Residues 148–160 show a composition bias toward low complexity; the sequence is QQGQQGQQSQGQG.

This sequence belongs to the 11S seed storage protein (globulins) family. Hexamer; each subunit is composed of an acidic and a basic chain derived from a single precursor and linked by a disulfide bond.

It localises to the rough endoplasmic reticulum. Functionally, this is a seed storage protein. In Brassica napus (Rape), this protein is Cruciferin (CRUA).